We begin with the raw amino-acid sequence, 236 residues long: Orotidine 5'-phosphate decarboxylase (236 aa).

Residues D14, K36, 63 to 72 (DLKFHDIPNT), T123, R184, Q193, G213, and R214 contribute to the substrate site. Residue K65 is the Proton donor of the active site.

It belongs to the OMP decarboxylase family. Type 1 subfamily. As to quaternary structure, homodimer.

It catalyses the reaction orotidine 5'-phosphate + H(+) = UMP + CO2. It functions in the pathway pyrimidine metabolism; UMP biosynthesis via de novo pathway; UMP from orotate: step 2/2. Functionally, catalyzes the decarboxylation of orotidine 5'-monophosphate (OMP) to uridine 5'-monophosphate (UMP). The chain is Orotidine 5'-phosphate decarboxylase from Marinobacter nauticus (strain ATCC 700491 / DSM 11845 / VT8) (Marinobacter aquaeolei).